Here is a 138-residue protein sequence, read N- to C-terminus: Phospholipase A2 homolog (138 aa).

Positions 1-16 are cleaved as a signal peptide; sequence MRALWIVAVWLIGVEG. Intrachain disulfides connect C42-C131, C44-C60, C59-C111, C65-C138, C66-C104, C73-C97, and C91-C102. The interval 121 to 133 is important for membrane-damaging activities in eukaryotes and bacteria; heparin-binding; the sequence is KKYTYYPNFLCKG.

This sequence belongs to the phospholipase A2 family. Group II subfamily. S49 sub-subfamily. Monomer. As to expression, expressed by the venom gland.

It is found in the secreted. Snake venom phospholipase A2 homolog that lacks enzymatic activity. Shows high myotoxin activities and displays edema-inducing activities. Has cytotoxic activities against HUVEC cells (LC(50)=5.0 uL) and human lung adenocarcinoma A549 cells (LC(50)=5.2 uL). In Echis ocellatus (Ocellated saw-scaled viper), this protein is Phospholipase A2 homolog.